Consider the following 499-residue polypeptide: Glycerol kinase (499 aa).

Residue Thr-13 participates in ADP binding. Positions 13, 14, and 15 each coordinate ATP. Thr-13 is a binding site for sn-glycerol 3-phosphate. Arg-17 is a binding site for ADP. Sn-glycerol 3-phosphate-binding residues include Arg-83, Glu-84, Tyr-135, and Asp-244. Arg-83, Glu-84, Tyr-135, Asp-244, and Gln-245 together coordinate glycerol. 2 residues coordinate ADP: Thr-266 and Gly-310. Thr-266, Gly-310, Gln-314, and Gly-411 together coordinate ATP. Residues Gly-411 and Asn-415 each contribute to the ADP site.

This sequence belongs to the FGGY kinase family.

It carries out the reaction glycerol + ATP = sn-glycerol 3-phosphate + ADP + H(+). The protein operates within polyol metabolism; glycerol degradation via glycerol kinase pathway; sn-glycerol 3-phosphate from glycerol: step 1/1. With respect to regulation, inhibited by fructose 1,6-bisphosphate (FBP). Functionally, key enzyme in the regulation of glycerol uptake and metabolism. Catalyzes the phosphorylation of glycerol to yield sn-glycerol 3-phosphate. The protein is Glycerol kinase of Pseudothermotoga lettingae (strain ATCC BAA-301 / DSM 14385 / NBRC 107922 / TMO) (Thermotoga lettingae).